A 572-amino-acid polypeptide reads, in one-letter code: Proline--tRNA ligase (572 aa).

The protein belongs to the class-II aminoacyl-tRNA synthetase family. ProS type 1 subfamily. In terms of assembly, homodimer.

It is found in the cytoplasm. It catalyses the reaction tRNA(Pro) + L-proline + ATP = L-prolyl-tRNA(Pro) + AMP + diphosphate. Catalyzes the attachment of proline to tRNA(Pro) in a two-step reaction: proline is first activated by ATP to form Pro-AMP and then transferred to the acceptor end of tRNA(Pro). As ProRS can inadvertently accommodate and process non-cognate amino acids such as alanine and cysteine, to avoid such errors it has two additional distinct editing activities against alanine. One activity is designated as 'pretransfer' editing and involves the tRNA(Pro)-independent hydrolysis of activated Ala-AMP. The other activity is designated 'posttransfer' editing and involves deacylation of mischarged Ala-tRNA(Pro). The misacylated Cys-tRNA(Pro) is not edited by ProRS. This is Proline--tRNA ligase from Escherichia coli O9:H4 (strain HS).